Reading from the N-terminus, the 111-residue chain is Large ribosomal subunit protein uL22 (111 aa).

The protein belongs to the universal ribosomal protein uL22 family. Part of the 50S ribosomal subunit.

Functionally, this protein binds specifically to 23S rRNA; its binding is stimulated by other ribosomal proteins, e.g. L4, L17, and L20. It is important during the early stages of 50S assembly. It makes multiple contacts with different domains of the 23S rRNA in the assembled 50S subunit and ribosome. Its function is as follows. The globular domain of the protein is located near the polypeptide exit tunnel on the outside of the subunit, while an extended beta-hairpin is found that lines the wall of the exit tunnel in the center of the 70S ribosome. The chain is Large ribosomal subunit protein uL22 from Clostridium tetani (strain Massachusetts / E88).